The following is a 133-amino-acid chain: Phosphoribosyl-AMP cyclohydrolase (133 aa).

Mg(2+) is bound at residue D82. Residue C83 coordinates Zn(2+). Mg(2+)-binding residues include D84 and D86. C99 and C106 together coordinate Zn(2+).

This sequence belongs to the PRA-CH family. In terms of assembly, homodimer. Mg(2+) is required as a cofactor. It depends on Zn(2+) as a cofactor.

The protein resides in the cytoplasm. It catalyses the reaction 1-(5-phospho-beta-D-ribosyl)-5'-AMP + H2O = 1-(5-phospho-beta-D-ribosyl)-5-[(5-phospho-beta-D-ribosylamino)methylideneamino]imidazole-4-carboxamide. It functions in the pathway amino-acid biosynthesis; L-histidine biosynthesis; L-histidine from 5-phospho-alpha-D-ribose 1-diphosphate: step 3/9. Its function is as follows. Catalyzes the hydrolysis of the adenine ring of phosphoribosyl-AMP. The chain is Phosphoribosyl-AMP cyclohydrolase from Rhodospirillum centenum (strain ATCC 51521 / SW).